The primary structure comprises 235 residues: Purine nucleoside phosphorylase DeoD-type (235 aa).

Position 4 (histidine 4) interacts with a purine D-ribonucleoside. Phosphate is bound by residues glycine 20, arginine 24, arginine 43, and 87–90; that span reads RVGT. Residues 178-180 and 202-203 contribute to the a purine D-ribonucleoside site; these read EME and SD. Aspartate 203 (proton donor) is an active-site residue.

This sequence belongs to the PNP/UDP phosphorylase family. Homohexamer; trimer of homodimers.

It carries out the reaction a purine D-ribonucleoside + phosphate = a purine nucleobase + alpha-D-ribose 1-phosphate. The enzyme catalyses a purine 2'-deoxy-D-ribonucleoside + phosphate = a purine nucleobase + 2-deoxy-alpha-D-ribose 1-phosphate. In terms of biological role, catalyzes the reversible phosphorolytic breakdown of the N-glycosidic bond in the beta-(deoxy)ribonucleoside molecules, with the formation of the corresponding free purine bases and pentose-1-phosphate. The protein is Purine nucleoside phosphorylase DeoD-type of Geobacillus sp. (strain WCH70).